Consider the following 544-residue polypeptide: MKCSTFSFWFVCKIIFFFFSFNIQTSIANPRENFLKCFSQYIPNNATNLKLVYTQNNPLYMSVLNSTIHNLRFTSDTTPKPLVIVTPSHVSHIQGTILCSKKVGLQIRTRSGGHDSEGMSYISQVPFVIVDLRNMRSIKIDVHSQTAWVEAGATLGEVYYWVNEKNENLSLAAGYCPTVCAGGHFGGGGYGPLMRNYGLAADNIIDAHLVNVHGKVLDRKSMGEDLFWALRGGGAESFGIIVAWKIRLVAVPKSTMFSVKKIMEIHELVKLVNKWQNIAYKYDKDLLLMTHFITRNITDNQGKNKTAIHTYFSSVFLGGVDSLVDLMNKSFPELGIKKTDCRQLSWIDTIIFYSGVVNYDTDNFNKEILLDRSAGQNGAFKIKLDYVKKPIPESVFVQILEKLYEEDIGAGMYALYPYGGIMDEISESAIPFPHRAGILYELWYICSWEKQEDNEKHLNWIRNIYNFMTPYVSKNPRLAYLNYRDLDIGINDPKNPNNYTQARIWGEKYFGKNFDRLVKVKTLVDPNNFFRNEQSIPPLPRHRH.

The N-terminal stretch at 1–28 (MKCSTFSFWFVCKIIFFFFSFNIQTSIA) is a signal peptide. Cys37 and Cys99 are disulfide-bonded. N-linked (GlcNAc...) asparagine glycans are attached at residues Asn45 and Asn65. One can recognise an FAD-binding PCMH-type domain in the interval 77–251 (TTPKPLVIVT…VAWKIRLVAV (175 aa)). Residues 109-115 (TRSGGHD) and Ser120 each bind FAD. The segment at residues 114–176 (HDSEGMSYIS…ENLSLAAGYC (63 aa)) is a cross-link (6-(S-cysteinyl)-8alpha-(pros-histidyl)-FAD (His-Cys)). Asn168 is a glycosylation site (N-linked (GlcNAc...) asparagine). Residues Cys176, 180 to 184 (CAGGH), Tyr190, Glu236, and Ile241 each bind FAD. His291 is a cannabigerolate binding site. 3 N-linked (GlcNAc...) asparagine glycosylation sites follow: Asn296, Asn304, and Asn328. Tyr416 and Glu441 together coordinate cannabigerolate. 480-482 (YLN) contacts FAD. The active-site Proton acceptor is the Tyr483. The N-linked (GlcNAc...) asparagine glycan is linked to Asn498.

This sequence belongs to the oxygen-dependent FAD-linked oxidoreductase family. As to quaternary structure, monomer. Requires FAD as cofactor. Post-translationally, glycosylated. The FAD cofactor is bound via a bicovalent 6-S-cysteinyl, 8alpha-N1-histidyl FAD linkage. In terms of tissue distribution, expressed in young leaves.

The protein localises to the secreted. It localises to the extracellular space. Its subcellular location is the apoplast. The catalysed reaction is cannabigerolate + O2 = cannabidiolate + H2O2. The protein operates within secondary metabolite biosynthesis; terpenoid biosynthesis. Inhibited by Hg(2+). Its function is as follows. Oxidoreductase involved in the biosynthesis of cannabinoids-related terpenophenolic natural products, which have pharmacological activity. Catalyzes the stereoselective oxidative cyclization of the monoterpene moiety in cannabigerolic acid (CBGA), producing cannabidiolate (CBDA), the major cannabioid in fiber-type Cannabis plants. Can also use cannabinerolic acid as substrate, but not cannabigerol or cannabinerol. The protein is Cannabidiolic acid synthase of Cannabis sativa (Hemp).